Reading from the N-terminus, the 151-residue chain is Sec-independent protein translocase protein TatB (151 aa).

Residues Met-1 to Gly-21 traverse the membrane as a helical segment. Positions Asn-120–Glu-131 are enriched in low complexity. The tract at residues Asn-120–Ala-151 is disordered. Polar residues predominate over residues Gln-132–Leu-142.

This sequence belongs to the TatB family. As to quaternary structure, the Tat system comprises two distinct complexes: a TatABC complex, containing multiple copies of TatA, TatB and TatC subunits, and a separate TatA complex, containing only TatA subunits. Substrates initially bind to the TatABC complex, which probably triggers association of the separate TatA complex to form the active translocon.

The protein resides in the cell inner membrane. Part of the twin-arginine translocation (Tat) system that transports large folded proteins containing a characteristic twin-arginine motif in their signal peptide across membranes. Together with TatC, TatB is part of a receptor directly interacting with Tat signal peptides. TatB may form an oligomeric binding site that transiently accommodates folded Tat precursor proteins before their translocation. The sequence is that of Sec-independent protein translocase protein TatB from Campylobacter fetus subsp. fetus (strain 82-40).